Reading from the N-terminus, the 467-residue chain is Zinc finger and BTB domain-containing protein 43 (467 aa).

Methionine 1 carries the N-acetylmethionine modification. One can recognise a BTB domain in the interval 33-97 (CDVSIVVQGH…SYTGRLVMPA (65 aa)). Disordered stretches follow at residues 134–153 (LNHGSDHQSPSSSSYNGLVE) and 162–225 (HTDF…SAEF). Basic and acidic residues-rich tracts occupy residues 164-174 (DFPKAQELRDG) and 182-194 (KDELSSQLTEHEY). Residues lysine 182, lysine 241, lysine 247, lysine 297, and lysine 358 each participate in a glycyl lysine isopeptide (Lys-Gly) (interchain with G-Cter in SUMO2) cross-link. The segment at 373–394 (YPCQCGKSFTHKSQRDRHMSMH) adopts a C2H2-type 1; atypical zinc-finger fold. The C2H2-type 2 zinc finger occupies 400-422 (YGCGVCGKKFKMKHHLVGHMKIH). The residue at position 423 (threonine 423) is a Phosphothreonine. A C2H2-type 3; atypical zinc finger spans residues 428–450 (YECNICAKRFMWRDSFHRHVTSC). Residue lysine 458 forms a Glycyl lysine isopeptide (Lys-Gly) (interchain with G-Cter in SUMO2) linkage.

This sequence belongs to the krueppel C2H2-type zinc-finger protein family. As to quaternary structure, interacts with BDP1.

It is found in the nucleus. May be involved in transcriptional regulation. This Homo sapiens (Human) protein is Zinc finger and BTB domain-containing protein 43 (ZBTB43).